The primary structure comprises 332 residues: Ribosomal RNA small subunit methyltransferase H (332 aa).

S-adenosyl-L-methionine is bound by residues 39–41 (GGY), D56, F83, D100, and Q107.

It belongs to the methyltransferase superfamily. RsmH family.

It is found in the cytoplasm. It catalyses the reaction cytidine(1402) in 16S rRNA + S-adenosyl-L-methionine = N(4)-methylcytidine(1402) in 16S rRNA + S-adenosyl-L-homocysteine + H(+). Its function is as follows. Specifically methylates the N4 position of cytidine in position 1402 (C1402) of 16S rRNA. This Bartonella tribocorum (strain CIP 105476 / IBS 506) protein is Ribosomal RNA small subunit methyltransferase H.